Reading from the N-terminus, the 443-residue chain is uncharacterized protein (443 aa).

The tract at residues 1 to 21 (MQSVTPPPTQQGKPDPTNSDM) is disordered. Positions 10–20 (QQGKPDPTNSD) are enriched in polar residues.

This is an uncharacterized protein from Caenorhabditis elegans.